The chain runs to 141 residues: Nucleoside triphosphatase NudI (141 aa).

Residues 1-141 (MRQRTIVCPL…RHTLALKGLL (141 aa)) form the Nudix hydrolase domain. The short motif at 38–59 (GGVEPGERIEEALRREIREELG) is the Nudix box element.

It belongs to the Nudix hydrolase family. NudI subfamily. In terms of assembly, monomer. It depends on Mg(2+) as a cofactor.

The catalysed reaction is a ribonucleoside 5'-triphosphate + H2O = a ribonucleoside 5'-phosphate + diphosphate + H(+). It carries out the reaction a 2'-deoxyribonucleoside 5'-triphosphate + H2O = a 2'-deoxyribonucleoside 5'-phosphate + diphosphate + H(+). It catalyses the reaction dUTP + H2O = dUMP + diphosphate + H(+). The enzyme catalyses dTTP + H2O = dTMP + diphosphate + H(+). The catalysed reaction is dCTP + H2O = dCMP + diphosphate + H(+). Its function is as follows. Catalyzes the hydrolysis of nucleoside triphosphates, with a preference for pyrimidine deoxynucleoside triphosphates (dUTP, dTTP and dCTP). The protein is Nucleoside triphosphatase NudI of Salmonella heidelberg (strain SL476).